A 419-amino-acid chain; its full sequence is Multifunctional CCA protein (419 aa).

The ATP site is built by Gly-8 and Arg-11. Residues Gly-8 and Arg-11 each contribute to the CTP site. Residues Asp-21 and Asp-23 each coordinate Mg(2+). The ATP site is built by Arg-91, Arg-149, and Arg-152. CTP is bound by residues Arg-91, Arg-149, and Arg-152. One can recognise an HD domain in the interval 238–339 (CGVHLMMVID…VRLLERCDAF (102 aa)).

Belongs to the tRNA nucleotidyltransferase/poly(A) polymerase family. Bacterial CCA-adding enzyme type 1 subfamily. In terms of assembly, monomer. Can also form homodimers and oligomers. Mg(2+) is required as a cofactor. Ni(2+) serves as cofactor.

It catalyses the reaction a tRNA precursor + 2 CTP + ATP = a tRNA with a 3' CCA end + 3 diphosphate. It carries out the reaction a tRNA with a 3' CCA end + 2 CTP + ATP = a tRNA with a 3' CCACCA end + 3 diphosphate. In terms of biological role, catalyzes the addition and repair of the essential 3'-terminal CCA sequence in tRNAs without using a nucleic acid template. Adds these three nucleotides in the order of C, C, and A to the tRNA nucleotide-73, using CTP and ATP as substrates and producing inorganic pyrophosphate. tRNA 3'-terminal CCA addition is required both for tRNA processing and repair. Also involved in tRNA surveillance by mediating tandem CCA addition to generate a CCACCA at the 3' terminus of unstable tRNAs. While stable tRNAs receive only 3'-terminal CCA, unstable tRNAs are marked with CCACCA and rapidly degraded. The protein is Multifunctional CCA protein of Variovorax paradoxus (strain S110).